We begin with the raw amino-acid sequence, 119 residues long: Small ribosomal subunit protein uS13 (119 aa).

Over residues arginine 92–proline 110 the composition is skewed to basic residues. The tract at residues arginine 92–arginine 119 is disordered.

Belongs to the universal ribosomal protein uS13 family. As to quaternary structure, part of the 30S ribosomal subunit. Forms a loose heterodimer with protein S19. Forms two bridges to the 50S subunit in the 70S ribosome.

Functionally, located at the top of the head of the 30S subunit, it contacts several helices of the 16S rRNA. In the 70S ribosome it contacts the 23S rRNA (bridge B1a) and protein L5 of the 50S subunit (bridge B1b), connecting the 2 subunits; these bridges are implicated in subunit movement. Contacts the tRNAs in the A and P-sites. The polypeptide is Small ribosomal subunit protein uS13 (Mycoplasma sp).